The primary structure comprises 428 residues: Kynureninase (428 aa).

Residues T104, T105, 132–135, D213, H216, and Y238 each bind pyridoxal 5'-phosphate; that span reads FPSD. K239 carries the post-translational modification N6-(pyridoxal phosphate)lysine. The pyridoxal 5'-phosphate site is built by W267 and T295.

The protein belongs to the kynureninase family. In terms of assembly, homodimer. Pyridoxal 5'-phosphate serves as cofactor.

The catalysed reaction is L-kynurenine + H2O = anthranilate + L-alanine + H(+). The enzyme catalyses 3-hydroxy-L-kynurenine + H2O = 3-hydroxyanthranilate + L-alanine + H(+). It participates in amino-acid degradation; L-kynurenine degradation; L-alanine and anthranilate from L-kynurenine: step 1/1. It functions in the pathway cofactor biosynthesis; NAD(+) biosynthesis; quinolinate from L-kynurenine: step 2/3. Catalyzes the cleavage of L-kynurenine (L-Kyn) and L-3-hydroxykynurenine (L-3OHKyn) into anthranilic acid (AA) and 3-hydroxyanthranilic acid (3-OHAA), respectively. The polypeptide is Kynureninase (Bacillus mycoides (strain KBAB4) (Bacillus weihenstephanensis)).